Consider the following 475-residue polypeptide: Bifunctional purple acid phosphatase 26 (475 aa).

The signal sequence occupies residues 1–30 (MNHLVIISVFLSSVLLLYRGESGITSSFIR). Asparagine 103 is a glycosylation site (N-linked (GlcNAc...) asparagine). Fe cation is bound by residues aspartate 162, aspartate 189, and tyrosine 192. Aspartate 189 serves as a coordination point for Zn(2+). Zn(2+) is bound by residues asparagine 227 and histidine 312. Asparagine 227 lines the substrate pocket. Histidine 322 functions as the Proton donor in the catalytic mechanism. Histidine 349 serves as a coordination point for Zn(2+). 349–351 (HVH) contributes to the substrate binding site. Residue histidine 351 coordinates Fe cation. 2 N-linked (GlcNAc...) asparagine glycosylation sites follow: asparagine 365 and asparagine 422.

The protein belongs to the metallophosphoesterase superfamily. Purple acid phosphatase family. As to quaternary structure, homodimer. Requires Fe cation as cofactor. Zn(2+) is required as a cofactor. Post-translationally, glycosylated. As to expression, expressed in roots, stems, leaves, flowers and siliques.

The protein resides in the vacuole. It carries out the reaction a phosphate monoester + H2O = an alcohol + phosphate. The catalysed reaction is 2 a phenolic donor + H2O2 = 2 a phenolic radical donor + 2 H2O. With respect to regulation, activated by Mg(2+), Co(2+), Mn(2+) and Ba(2+). Inhibited by Fe(2+), Cu(2+), Zn(2+), NaF, molybdate, arsenate, vanadate and inorganic phosphate. No effect of tartrate, Asp, Gln, glutathione, Asn, ascorbic acid and phosphite. In terms of biological role, metallo-phosphoesterase involved in phosphate metabolism. Acid phosphatase activity with phosphoenolpyruvate, inorganic pyrophosphate, phenyl-phosphate and p-nitrophenyl-phosphate as the most effective substrates. No activity with phytic acid, phosphocholine or bis-p-nitrophenyl-phosphate. Has a peroxidase activity at alkaline pH. This Arabidopsis thaliana (Mouse-ear cress) protein is Bifunctional purple acid phosphatase 26 (PAP26).